The chain runs to 984 residues: Shutoff protein (984 aa).

Positions 131–231 (GVAAESDPSD…DLERDALVAP (101 aa)) are disordered. Positions 137-147 (DPSDDEPDPEP) are enriched in acidic residues. Positions 148-159 (EYDHREADHDSD) are enriched in basic and acidic residues. Residues 176–186 (VDEEPQDDSPS) are compositionally biased toward acidic residues. The segment covering 190–202 (TASTVIEEAQTSA) has biased composition (polar residues). Residues 205 to 216 (DSHDDDTHRDDG) show a composition bias toward basic and acidic residues. The tract at residues 411–476 (LMETLLQPFA…AVRYTATLEL (66 aa)) is binding to host EIF4G. Residues 479–597 (RVFREPSMVK…RLYSLPNPTA (119 aa)) enclose the RRM domain. Disordered regions lie at residues 810-853 (GVYK…GNRA) and 876-984 (KVGP…RQEE). Tyr-812 bears the Phosphotyrosine; by host mark. Residues 913-923 (AGGRRFGRRNT) are compositionally biased toward basic residues. Over residues 945–958 (RGQQGEHPTTSPSA) the composition is skewed to low complexity.

This sequence belongs to the adenoviridae shutoff protein family. Monomer. Interacts with hexon protein; this interaction allows chaperoning and trimerization of hexon proteins. Interacts (via N-terminus) with host initiation factor EIF4G (via C-terminus). Interacts (via RRM domain) with viral mRNAs that contain the tripartite leader; this interaction allows ribosome shunting and expression of viral late mRNAs. Might be cleaved by the viral protease. In terms of processing, phosphorylated. Tyrosine phosphorylation enhances preferential binding to tripartite leader mRNAs and allows ribosome shunting. Post-translationally, methylated. Asymmetric dimethylation by host PRMT1 of the Arg/Gly-rich region may regulate shutoff protein binding to hexon and promote the capsid assembly in the nucleus.

It localises to the host cytoplasm. Protein that inhibits host translation while promoting late viral translation by ribosome shunting. Blocks host cap-dependent translation by binding to eIF4G, displacing MKNK1 from cap initiation complexes and preventing EIF4E phosphorylation. Binds to the tripartite leader sequence of viral late mRNAs and recruits host eIF4G, PABPC1/poly-A binding protein and 40S ribosomes subunits on viral mRNAs, allowing ribosome shunting and efficient translation of late viral mRNAs even though conventional translation via ribosome scanning from the cap has been shut off in the host cell. During assembly, acts as a chaperone protein that helps hexon proteins assembly into trimers. In Galliformes (FAdV-1), this protein is Shutoff protein.